Consider the following 233-residue polypeptide: MRITQYQTVWQLTFFPALFPVNCYLVEEENEVTLIDAALPGSYKGIIQAVNQLGKPLQHILLTHAHGDHVGSLDTLAQTFPHAKVMISERDSFLLQGDTSLRQDEPQTPIKGGIPKHIQTKPHQLLTGGETIGSLLAIPTPGHTPGSMSFLDTRNGTLIAGDAFQLRGGIAVSGQIKWAFPFPAFATWNKEEAIKSAQLLADKAPSCLAVGHGKFLRSPSERMRQAIQKAKKG.

The Zn(2+) site is built by H64, H66, D68, H69, H143, D162, and H212.

Belongs to the metallo-beta-lactamase superfamily. Glyoxalase II family. Zn(2+) serves as cofactor.

This is an uncharacterized protein from Bacillus subtilis (strain 168).